Here is a 765-residue protein sequence, read N- to C-terminus: Carboxysome assembly protein CsoS2 (765 aa).

Basic and acidic residues predominate over residues 1-22 (MSTKTSREIALERRKAMSDGGK). Disordered regions lie at residues 1–107 (MSTK…RTDV) and 165–229 (REAQ…NKNG). Residues 1–215 (MSTKTSREIA…RSKTGSTSKQ (215 aa)) form an N-terminal domain region. Residues 7 to 22 (REIALERRKAMSDGGK) form an N-repeat 1 repeat. Positions 38–63 (SQDINSTGATSSNKKVLTSPSKSNIP) are enriched in polar residues. Residues 77–87 (SSKELGIERRK) show a composition bias toward basic and acidic residues. N-repeat repeat units lie at residues 79 to 94 (KELG…THGK), 158 to 173 (RDIV…KHGK), and 196 to 211 (REIS…KTGS). A compositionally biased stretch (basic and acidic residues) spans 187-207 (RRGDPDLSSREISQRVRELRS). A middle region region spans residues 216-586 (GNGKCRPCGP…LSNCETPPND (371 aa)). 6 M-repeat repeats span residues 240–289 (KVGK…GQFC), 300–349 (RASV…KKYC), 358–397 (KVMQ…GDQY), 411–460 (KVGS…EKFC), 470–519 (KVGL…NDNC), and 530–580 (RATV…LSNC). Disordered regions lie at residues 306-328 (TTSG…GDEP) and 367-413 (GLKV…EKVG). A C-terminal domain region spans residues 589–734 (YANQEKSASN…AMPPVDNKRN (146 aa)). 2 C-repeat repeats span residues 604 to 648 (SVNS…GTEQ) and 677 to 711 (KKEP…EGVS). 2 disordered regions span residues 611–637 (EKYS…GPFD) and 656–765 (NMTY…GARG). The span at 730–741 (DNKRNDETEKPD) shows a compositional bias: basic and acidic residues. The tract at residues 735-765 (DETEKPDFLITGSSGNTRDGQLVTFSGGARG) is C-terminal peptide.

It belongs to the CsoS2 family. As to quaternary structure, probably interacts with the carboxysome major shell protein CsoS1 via the N-terminal domain. A CsoS1-CsoS1D-CsoS2 complex can be isolated following expression in E.coli. Interacts via its N-terminal repeats with RuBisCO. In terms of processing, unlike H.neapolitanus and predictions for P.marinus strain MIT 9313, this protein is not thought to have ribosomal frameshifting.

The protein resides in the carboxysome. Its function is as follows. Required for alpha-carboxysome (Cb) assembly, mediates interaction between RuBisCO and the Cb shell. The protein is probably highly flexible. The C-terminal repeats act as the encapsulation signal to target proteins to the Cb; they are necessary and sufficient to target both CsoS2 and foreign proteins to the Cb. The N-terminal repeats of this protein bind simultaneously to both subunits of RuBisCO. Probably also interacts with the major shell proteins (CsoS1); that interaction would increase the local concentration of CsoS2 so that it can condense RuBisCO and full carboxysomes can be formed. There are estimated to be 163 CsoS2 proteins per carboxysome; unlike H.neapolitanus only 1 form is seen. The protein is Carboxysome assembly protein CsoS2 of Prochlorococcus marinus subsp. pastoris (strain CCMP1986 / NIES-2087 / MED4).